A 739-amino-acid polypeptide reads, in one-letter code: Cellulose synthase catalytic subunit [UDP-forming] (739 aa).

The next 4 membrane-spanning stretches (helical) occupy residues 36 to 55 (VLVV…IISA), 59 to 76 (LYSQ…VLVL), 83 to 101 (LAIL…RYMF), and 116 to 138 (MFFG…FGYV). Residues 157-250 (EWPTVDVFIP…YIALFDADHV (94 aa)) form a catalytic subdomain A region. Residue Asp199 is part of the active site. Residues Asp246 and Asp248 each contribute to the substrate site. Residues 327–387 (EPLLEIGGVA…NQRIRWARGM (61 aa)) are catalytic subdomain B. Asp343 is an active-site residue. 4 consecutive transmembrane segments (helical) span residues 417–436 (FFYG…YLIF), 440–462 (IFHA…SSLT), 524–546 (PYLV…LIWG), and 551–573 (AVTV…AAVA). In terms of domain architecture, PilZ spans 580–677 (QVRSEPRVSA…QSELVRLTFS (98 aa)).

The protein belongs to the glycosyltransferase 2 family. It depends on Mg(2+) as a cofactor.

Its subcellular location is the cell inner membrane. The catalysed reaction is [(1-&gt;4)-beta-D-glucosyl](n) + UDP-alpha-D-glucose = [(1-&gt;4)-beta-D-glucosyl](n+1) + UDP + H(+). Its pathway is glycan metabolism; bacterial cellulose biosynthesis. With respect to regulation, activated by bis-(3'-5') cyclic diguanylic acid (c-di-GMP). Catalytic subunit of cellulose synthase. It polymerizes uridine 5'-diphosphate glucose to cellulose, which is produced as an extracellular component responsible for the structural integrity and rigidity of self-supporting mats characteristic of the 'wrinkly spreader' phenotype. This is Cellulose synthase catalytic subunit [UDP-forming] (bcsA) from Pseudomonas fluorescens (strain SBW25).